Here is a 163-residue protein sequence, read N- to C-terminus: Cyclic pyranopterin monophosphate synthase (163 aa).

Substrate-binding positions include 75 to 77 (MCH) and 113 to 114 (ME). Asp128 is an active-site residue.

It belongs to the MoaC family. Homohexamer; trimer of dimers.

The enzyme catalyses (8S)-3',8-cyclo-7,8-dihydroguanosine 5'-triphosphate = cyclic pyranopterin phosphate + diphosphate. Its pathway is cofactor biosynthesis; molybdopterin biosynthesis. Its function is as follows. Catalyzes the conversion of (8S)-3',8-cyclo-7,8-dihydroguanosine 5'-triphosphate to cyclic pyranopterin monophosphate (cPMP). This Desulforapulum autotrophicum (strain ATCC 43914 / DSM 3382 / VKM B-1955 / HRM2) (Desulfobacterium autotrophicum) protein is Cyclic pyranopterin monophosphate synthase.